Reading from the N-terminus, the 629-residue chain is tRNA uridine 5-carboxymethylaminomethyl modification enzyme MnmG (629 aa).

Residues 13 to 18 (GGGHAG), Val-125, and Ser-180 each bind FAD. 273-287 (GPRYCPSIEDKVMRF) is an NAD(+) binding site. Gln-370 contributes to the FAD binding site.

It belongs to the MnmG family. In terms of assembly, homodimer. Heterotetramer of two MnmE and two MnmG subunits. FAD is required as a cofactor.

The protein resides in the cytoplasm. In terms of biological role, NAD-binding protein involved in the addition of a carboxymethylaminomethyl (cmnm) group at the wobble position (U34) of certain tRNAs, forming tRNA-cmnm(5)s(2)U34. The sequence is that of tRNA uridine 5-carboxymethylaminomethyl modification enzyme MnmG from Escherichia coli O45:K1 (strain S88 / ExPEC).